The chain runs to 761 residues: Nitrogen fixation protein FixI (761 aa).

The Cytoplasmic segment spans residues M1–N120. Residues R36 to H106 form the HMA domain. Residues C47 and C50 each coordinate a metal cation. Residues Q121–S142 form a helical membrane-spanning segment. At V143–F155 the chain is on the extracellular side. A helical membrane pass occupies residues H156–S177. The Cytoplasmic segment spans residues A178–H184. Residues G185–L205 form a helical membrane-spanning segment. Residues W206 to F217 lie on the Extracellular side of the membrane. Residues D218–R238 form a helical membrane-spanning segment. Topologically, residues E239–R367 are cytoplasmic. Residues A368–L390 form a helical membrane-spanning segment. Over G391 to K395 the chain is Extracellular. The chain crosses the membrane as a helical span at residues Q396 to L415. Topologically, residues A416–I691 are cytoplasmic. Residue D453 is the 4-aspartylphosphate intermediate of the active site. Mg(2+)-binding residues include D637 and D641. Residues R692–A711 traverse the membrane as a helical segment. Topologically, residues G712–P716 are extracellular. The chain crosses the membrane as a helical span at residues L717–L735. Topologically, residues R736–A761 are cytoplasmic.

This sequence belongs to the cation transport ATPase (P-type) (TC 3.A.3) family. Type IB subfamily.

The protein localises to the cell membrane. The enzyme catalyses ATP + H2O = ADP + phosphate + H(+). Its function is as follows. FixI is a pump of a specific cation involved in symbiotic nitrogen fixation. The four proteins FixG, FixH, FixI, and FixS may participate in a membrane-bound complex coupling the FixI cation pump with a redox process catalyzed by FixG. This is Nitrogen fixation protein FixI (fixI) from Rhizobium leguminosarum bv. viciae.